Reading from the N-terminus, the 457-residue chain is Protein trichome birefringence-like 4 (457 aa).

A helical; Signal-anchor for type II membrane protein membrane pass occupies residues 19-37 (IFLTSLFFLSLFLLSSSSL). Residues 173–175 (GDS) carry the GDS motif motif. The DCXHWCLPGXXDXWN motif signature appears at 420-434 (DCSHWCLPGVPDSWN).

Belongs to the PC-esterase family. TBL subfamily.

It is found in the membrane. Functionally, may act as a bridging protein that binds pectin and other cell wall polysaccharides. Probably involved in maintaining esterification of pectins. May be involved in the specific O-acetylation of cell wall polymers. The chain is Protein trichome birefringence-like 4 (TBL4) from Arabidopsis thaliana (Mouse-ear cress).